Here is a 203-residue protein sequence, read N- to C-terminus: Thymidylate kinase (203 aa).

Gly7 to Thr14 is an ATP binding site.

Belongs to the thymidylate kinase family.

The enzyme catalyses dTMP + ATP = dTDP + ADP. In terms of biological role, phosphorylation of dTMP to form dTDP in both de novo and salvage pathways of dTTP synthesis. The chain is Thymidylate kinase from Chlamydia trachomatis serovar L2 (strain ATCC VR-902B / DSM 19102 / 434/Bu).